A 370-amino-acid chain; its full sequence is Alpha-ketoglutarate-dependent xanthine dioxygenase xanA (370 aa).

Position 107 (histidine 107) interacts with substrate. Residues histidine 149 and aspartate 151 each contribute to the Fe cation site. Positions 195 and 325 each coordinate 2-oxoglutarate. Residue histidine 340 coordinates Fe cation. Arginine 352 lines the 2-oxoglutarate pocket.

Belongs to the TfdA dioxygenase family. Requires Fe(2+) as cofactor. Post-translationally, glycosylated. Is subject to both N- and O-linked glycosylation. Phosphorylated.

The protein localises to the cytoplasm. It localises to the cytosol. It catalyses the reaction xanthine + 2-oxoglutarate + O2 = urate + succinate + CO2. Cu(2+) and Zn(2+) completely inhibit the xanthine dioxygenase activity, whereas Co(2+), Mn(2+), and Ni(2+) partially inhibit the activity. The inactive metal ions are presumed to compete for the Fe(2+)-binding site. N-oxalylglycine (NOG), a known inhibitor of several Fe(2+)/alpha-ketoglutarate-dependent dioxygenase family members, competes with alpha-ketoglutarate and provides a Ki of 0.12 uM for inhibition. 6,8-dihydroxypurine acts as a slow-binding competitive inhibitor. The thiol-specific inhibitors 5,5'-dithiobis(2-nitrobenzoic acid) (DTNB) and iodoacetamide, inhibit also the catalytic activity. Alpha-ketoglutarate-dependent xanthine dioxygenase is a non-heme mononuclear Fe(2+) enzyme that decarboxylates alpha-ketoglutarate to succinate and CO(2) while hydroxylating xanthine to generate uric acid. Allows xanthine utilization as a nitrogen source. Whereas xanA is highly specific for xanthine, alpha-ketoadipic acid can replace alpha-ketoglutarate as a cosubstrate. Exhibits ferroxidase activity in the absence of substrates. In Emericella nidulans (Aspergillus nidulans), this protein is Alpha-ketoglutarate-dependent xanthine dioxygenase xanA.